The following is a 105-amino-acid chain: Vitelline membrane protein Vm32E (105 aa).

An N-terminal signal peptide occupies residues 1–17 (MHFIALIVAVCVAFAGA). The VM domain maps to 25-62 (GIAAPPCPKNYLFSCQPNLVPAPCAQEAASYGSAGAYA).

The protein belongs to the vitelline membrane family.

Its subcellular location is the secreted. Major early eggshell protein. This is Vitelline membrane protein Vm32E from Drosophila ananassae (Fruit fly).